The chain runs to 147 residues: Protein phosphatase 1 regulatory subunit 14A (147 aa).

Residues Met-1–Leu-11 show a composition bias toward basic residues. Positions Met-1–Val-37 are disordered. Residue Ser-26 is modified to Phosphoserine. Positions Ala-35 to Arg-120 are inhibitory. Thr-38 carries the post-translational modification Phosphothreonine; by PKC. Positions Leu-118–Pro-147 are disordered. A compositionally biased stretch (polar residues) spans Pro-127–Pro-137. 3 positions are modified to phosphoserine: Ser-128, Ser-134, and Ser-136.

This sequence belongs to the PP1 inhibitor family. In terms of tissue distribution, isoform 1 is detected in aorta and testis. Isoform 2 is detected in aorta.

Its subcellular location is the cytoplasm. Its function is as follows. Inhibitor of PPP1CA. Has over 1000-fold higher inhibitory activity when phosphorylated, creating a molecular switch for regulating the phosphorylation status of PPP1CA substrates and smooth muscle contraction. The sequence is that of Protein phosphatase 1 regulatory subunit 14A (PPP1R14A) from Homo sapiens (Human).